We begin with the raw amino-acid sequence, 88 residues long: Large ribosomal subunit protein bL27 (88 aa).

A disordered region spans residues 1-24 (MAHKKGTGSTRNGRDSNSKRLGVK).

The protein belongs to the bacterial ribosomal protein bL27 family.

The sequence is that of Large ribosomal subunit protein bL27 from Prochlorococcus marinus (strain MIT 9303).